Reading from the N-terminus, the 274-residue chain is NH(3)-dependent NAD(+) synthetase (274 aa).

46–53 (GISGGQDS) lines the ATP pocket. Residue D52 participates in Mg(2+) binding. Deamido-NAD(+) is bound at residue R140. ATP is bound at residue T160. Residue E165 coordinates Mg(2+). 2 residues coordinate deamido-NAD(+): K173 and D180. The ATP site is built by K189 and T211. 260–261 (HK) contacts deamido-NAD(+).

This sequence belongs to the NAD synthetase family. In terms of assembly, homodimer.

It catalyses the reaction deamido-NAD(+) + NH4(+) + ATP = AMP + diphosphate + NAD(+) + H(+). Its pathway is cofactor biosynthesis; NAD(+) biosynthesis; NAD(+) from deamido-NAD(+) (ammonia route): step 1/1. In terms of biological role, catalyzes the ATP-dependent amidation of deamido-NAD to form NAD. Uses ammonia as a nitrogen source. In Streptococcus gordonii (strain Challis / ATCC 35105 / BCRC 15272 / CH1 / DL1 / V288), this protein is NH(3)-dependent NAD(+) synthetase.